The sequence spans 610 residues: E3 ubiquitin-protein ligase hrd-1 (610 aa).

The N-terminal stretch at 1 to 23 (MRVSAGLMIGGSCVATAATILNA) is a signal peptide. The Lumenal segment spans residues 24–41 (FLINKQFYPSIVYLSKSN). The helical transmembrane segment at 42 to 62 (ASMAVIYVQGIVLVYLMFQLL) threads the bilayer. Topologically, residues 63–99 (KSILFGDLRAAEAEHLSERTWHAVLETCLAFTVFRDD) are cytoplasmic. A helical transmembrane segment spans residues 100-120 (FSAIFVMQFIGLLFIKCFHWL). Residues 121 to 144 (ADDRVDMMERSPVITLRFHLRMMT) are Lumenal-facing. The helical transmembrane segment at 145–165 (VLAALGFADSYFVSSAYFTTI) threads the bilayer. At 166–170 (TRGAS) the chain is on the cytoplasmic side. Residues 171–191 (AQIVFGFEYAILLALVLHVTI) traverse the membrane as a helical segment. Topologically, residues 192–215 (KYLLHMHDLRNPQSWDNKAVYLLY) are lumenal. Residues 216-236 (AELFINLIRCLLYGFFAVVML) traverse the membrane as a helical segment. The Cytoplasmic segment spans residues 237 to 610 (RVHTFPLFSV…ARLLGENANQ (374 aa)). Residues 292 to 333 (CIICREEMTVDASPKRLPCSHVFHAHCLRSWFQRQQTCPTCR) form an RING-type; atypical zinc finger. 3 disordered regions span residues 386-408 (QPAGAGGAQPGAAQAGGQPGPFP), 452-480 (VNTTQGTSSETPPVNPSYSQLSTEELRRM), and 521-610 (RPVV…NANQ). Residues 452-474 (VNTTQGTSSETPPVNPSYSQLST) are compositionally biased toward polar residues. Over residues 560–589 (TESPSTSSTAPSTSSPVTASSTPTTSSTRT) the composition is skewed to low complexity.

Belongs to the HRD1 family. In terms of assembly, homodimer.

The protein localises to the endoplasmic reticulum membrane. It catalyses the reaction S-ubiquitinyl-[E2 ubiquitin-conjugating enzyme]-L-cysteine + [acceptor protein]-L-lysine = [E2 ubiquitin-conjugating enzyme]-L-cysteine + N(6)-ubiquitinyl-[acceptor protein]-L-lysine.. The protein operates within protein modification; protein ubiquitination. In terms of biological role, acts as an E3 ubiquitin-protein ligase which accepts ubiquitin specifically from endoplasmic reticulum-associated ubc-7 E2 ligase and transfers it to substrates, promoting their degradation. Component of the endoplasmic reticulum quality control (ERQC) system, which is also called the ER-associated degradation (ERAD) system, involved in ubiquitin-dependent degradation of misfolded endoplasmic reticulum proteins. Also promotes the degradation of normal but naturally short-lived proteins. Protects cells from ER stress-induced apoptosis. Thought to play a role together with hsp-3 in developmental growth and function of intestinal cells and to play a role together with hsp-4 in gonad formation. Plays a key role in the degradation of the potassium channel slo-1, perhaps acting directly, in targeting slo-1 to the ER-associated degradation pathway (ERAD), and also indirectly, via activation of the transcription factor skn-1, which mediates proteasomal homeostasis. The chain is E3 ubiquitin-protein ligase hrd-1 (sel-11) from Caenorhabditis elegans.